Reading from the N-terminus, the 357-residue chain is Homoserine kinase (357 aa).

Residue K133 forms a Glycyl lysine isopeptide (Lys-Gly) (interchain with G-Cter in ubiquitin) linkage.

This sequence belongs to the GHMP kinase family. Homoserine kinase subfamily. Homodimer.

It catalyses the reaction L-homoserine + ATP = O-phospho-L-homoserine + ADP + H(+). It functions in the pathway amino-acid biosynthesis; L-threonine biosynthesis; L-threonine from L-aspartate: step 4/5. Its function is as follows. Commits homoserine to the threonine biosynthesis pathway by catalyzing its O-phosphorylation. The protein is Homoserine kinase (THR1) of Saccharomyces cerevisiae (strain ATCC 204508 / S288c) (Baker's yeast).